The sequence spans 210 residues: Protein SgcE (210 aa).

S6 provides a ligand contact to substrate. Positions 31, 33, and 64 each coordinate a divalent metal cation. D33 acts as the Proton acceptor in catalysis. Residues H64, 140-143 (DGQG), 169-171 (DGG), and 191-192 (GR) contribute to the substrate site. Residue D169 participates in a divalent metal cation binding. The active-site Proton donor is the D169.

The protein belongs to the ribulose-phosphate 3-epimerase family. It depends on Co(2+) as a cofactor. Requires Fe(2+) as cofactor. The cofactor is Mn(2+). Zn(2+) is required as a cofactor.

It functions in the pathway carbohydrate degradation. Functionally, probable pentose-5-phosphate 3-epimerase. This Escherichia coli (strain K12) protein is Protein SgcE (sgcE).